A 206-amino-acid polypeptide reads, in one-letter code: tRNA(Phe) 7-((3-amino-3-carboxypropyl)-4-demethylwyosine(37)-N(4))-methyltransferase 2 (206 aa).

This sequence belongs to the TYW3 family.

It carries out the reaction 4-demethyl-7-[(3S)-3-amino-3-carboxypropyl]wyosine(37) in tRNA(Phe) + S-adenosyl-L-methionine = 7-[(3S)-3-amino-3-carboxypropyl]wyosine(37) in tRNA(Phe) + S-adenosyl-L-homocysteine + H(+). In terms of biological role, S-adenosyl-L-methionine-dependent methyltransferase that acts as a component of the wyosine derivatives biosynthesis pathway. Probably methylates N-4 position of wybutosine-86 to produce wybutosine-72. The chain is tRNA(Phe) 7-((3-amino-3-carboxypropyl)-4-demethylwyosine(37)-N(4))-methyltransferase 2 from Pyrococcus horikoshii (strain ATCC 700860 / DSM 12428 / JCM 9974 / NBRC 100139 / OT-3).